The primary structure comprises 173 residues: Translation initiation factor IF-3 (173 aa).

It belongs to the IF-3 family. As to quaternary structure, monomer.

The protein localises to the cytoplasm. Its function is as follows. IF-3 binds to the 30S ribosomal subunit and shifts the equilibrium between 70S ribosomes and their 50S and 30S subunits in favor of the free subunits, thus enhancing the availability of 30S subunits on which protein synthesis initiation begins. The chain is Translation initiation factor IF-3 from Phenylobacterium zucineum (strain HLK1).